A 451-amino-acid chain; its full sequence is MIDSEALESERVKLKRDIADLRANLNRKEQCLRELEAAIAAGEDSDEAEESSNDMPTPQTKLTNDDIARYSRQLILQDFGVQGQLKLKNSSVLIVGMGGLGCPAAQYLVAAGCGHLGLIDYDEVERSNLHRQILHSEHRCGMSKAESARIALLELNSHCQIRCHSRLINSMNAMHIIRPYDVVLDCSDNVATRYLLNDACVMLRKPLVSGSALKMDGQLTVYGYGQGPCYRCIYPVPPPPEAVTNCGDGGVLGAVTGIIGAMQALEAIKLIIGLGDVMSGRLLIFDGSSFMFRNIRIRTKRPNCHVCSAQPLITELIDYEMFCGMHATDKDNPLDLLEPDQRLEVKEYHQKLQSQPHLLLDVRPPAEFEICQLPRSINVPLSEILDDSYLKRFAKQLEDKELPIVLLCRRGNDSQIAVQHITNRFPAHSIRDLVGGLHAWTGSVDATFPIY.

Positions 42–62 (GEDSDEAEESSNDMPTPQTKL) are disordered. Over residues 43–52 (EDSDEAEESS) the composition is skewed to acidic residues. T60 is subject to Phosphothreonine. ATP contacts are provided by residues G99, D120, 127–131 (SNLHR), K144, and 188–189 (DN). C229 and C232 together coordinate Zn(2+). C246 serves as the catalytic Glycyl thioester intermediate; for adenylyltransferase activity. Zn(2+) contacts are provided by C304 and C307. The region spanning 353-449 (QSQPHLLLDV…WTGSVDATFP (97 aa)) is the Rhodanese domain. C408 acts as the Cysteine persulfide intermediate; for sulfurtransferase activity in catalysis.

In the N-terminal section; belongs to the HesA/MoeB/ThiF family. UBA4 subfamily. The cofactor is Zn(2+).

Its subcellular location is the cytoplasm. The enzyme catalyses [molybdopterin-synthase sulfur-carrier protein]-C-terminal Gly-Gly + ATP + H(+) = [molybdopterin-synthase sulfur-carrier protein]-C-terminal Gly-Gly-AMP + diphosphate. It carries out the reaction [molybdopterin-synthase sulfur-carrier protein]-C-terminal Gly-Gly-AMP + S-sulfanyl-L-cysteinyl-[cysteine desulfurase] + AH2 = [molybdopterin-synthase sulfur-carrier protein]-C-terminal-Gly-aminoethanethioate + L-cysteinyl-[cysteine desulfurase] + A + AMP + 2 H(+). It functions in the pathway tRNA modification; 5-methoxycarbonylmethyl-2-thiouridine-tRNA biosynthesis. The protein operates within cofactor biosynthesis; molybdopterin biosynthesis. Plays a central role in 2-thiolation of mcm(5)S(2)U at tRNA wobble positions of cytosolic tRNA(Lys), tRNA(Glu) and tRNA(Gln). Also essential during biosynthesis of the molybdenum cofactor. Acts by mediating the C-terminal thiocarboxylation of sulfur carriers URM1 and MOCS2A. Its N-terminus first activates URM1 and MOCS2A as acyl-adenylates (-COAMP), then the persulfide sulfur on the catalytic cysteine is transferred to URM1 and MOCS2A to form thiocarboxylation (-COSH) of their C-terminus. The reaction probably involves hydrogen sulfide that is generated from the persulfide intermediate and that acts as a nucleophile towards URM1 and MOCS2A. Subsequently, a transient disulfide bond is formed. Does not use thiosulfate as sulfur donor; NFS1 probably acting as a sulfur donor for thiocarboxylation reactions. The sequence is that of Adenylyltransferase and sulfurtransferase MOCS3-1 from Drosophila pseudoobscura pseudoobscura (Fruit fly).